Consider the following 626-residue polypeptide: Glycosyltransferase 25 family member (626 aa).

Residues 1–21 (MLKKQVFYGILLICAFVCIYG) form the signal peptide. Asparagine 113, asparagine 234, asparagine 272, and asparagine 533 each carry an N-linked (GlcNAc...) asparagine glycan. The Prevents secretion from ER signature appears at 623 to 626 (HQEL).

This sequence belongs to the glycosyltransferase 25 family.

The protein resides in the endoplasmic reticulum lumen. In Drosophila pseudoobscura pseudoobscura (Fruit fly), this protein is Glycosyltransferase 25 family member.